Reading from the N-terminus, the 612-residue chain is Protein NorD (612 aa).

Positions 220 to 246 are disordered; that stretch reads EGEGDLETPPSGQSRQRNGARRVDDSS. One can recognise a VWFA domain in the interval 420-609; that stretch reads DLACLLLADL…FPPAAAVQAT (190 aa).

Functionally, component of the anaerobic respiratory chain that transforms nitrate to dinitrogen (denitrification). The protein is Protein NorD (norD) of Stutzerimonas stutzeri (Pseudomonas stutzeri).